Reading from the N-terminus, the 336-residue chain is Aspartate--ammonia ligase (336 aa).

The protein belongs to the class-II aminoacyl-tRNA synthetase family. AsnA subfamily.

The protein resides in the cytoplasm. The enzyme catalyses L-aspartate + NH4(+) + ATP = L-asparagine + AMP + diphosphate + H(+). The protein operates within amino-acid biosynthesis; L-asparagine biosynthesis; L-asparagine from L-aspartate (ammonia route): step 1/1. The protein is Aspartate--ammonia ligase of Clostridium perfringens (strain SM101 / Type A).